Reading from the N-terminus, the 178-residue chain is Interleukin-10 (178 aa).

Positions 1 to 18 (MPNPVLLYCLVLLAGMGT) are cleaved as a signal peptide. 2 disulfide bridges follow: C30-C126 and C80-C132. Residue N134 is glycosylated (N-linked (GlcNAc...) asparagine).

Belongs to the IL-10 family. In terms of assembly, homodimer. Interacts with IL10RA and IL10RB.

It is found in the secreted. Functionally, major immune regulatory cytokine that acts on many cells of the immune system where it has profound anti-inflammatory functions, limiting excessive tissue disruption caused by inflammation. Mechanistically, IL10 binds to its heterotetrameric receptor comprising IL10RA and IL10RB leading to JAK1 and STAT2-mediated phosphorylation of STAT3. In turn, STAT3 translocates to the nucleus where it drives expression of anti-inflammatory mediators. Targets antigen-presenting cells (APCs) such as macrophages and monocytes and inhibits their release of pro-inflammatory cytokines including granulocyte-macrophage colony-stimulating factor /GM-CSF, granulocyte colony-stimulating factor/G-CSF, IL-1 alpha, IL-1 beta, IL-6, IL-8 and TNF-alpha. Also interferes with antigen presentation by reducing the expression of MHC-class II and co-stimulatory molecules, thereby inhibiting their ability to induce T cell activation. In addition, controls the inflammatory response of macrophages by reprogramming essential metabolic pathways including mTOR signaling. This Marmota monax (Woodchuck) protein is Interleukin-10 (IL10).